Consider the following 444-residue polypeptide: Cell division cycle 20.4, cofactor of APC complex (444 aa).

The segment covering 88-99 (LLSTNHSDSPHQ) has biased composition (polar residues). Residues 88-108 (LLSTNHSDSPHQNPKPVKPRR) are disordered. WD repeat units follow at residues 124–161 (RDDF…TSEL), 166–205 (EDKG…QVRT), 209–246 (GHES…SIVE), 250–289 (GHTE…SKQT), 298–340 (EHTA…CLNS), 342–383 (ETGS…KMAE), and 386–425 (GHTS…PKTT).

Belongs to the WD repeat CDC20/Fizzy family. As to quaternary structure, the APC/C is composed of at least 11 subunits that stay tightly associated throughout the cell cycle.

Its subcellular location is the cytoplasm. The protein operates within protein modification; protein ubiquitination. In terms of biological role, component of the anaphase promoting complex/cyclosome (APC/C), a cell cycle-regulated E3 ubiquitin-protein ligase complex that controls progression through mitosis and the G1 phase of the cell cycle. The sequence is that of Cell division cycle 20.4, cofactor of APC complex (CDC20-4) from Arabidopsis thaliana (Mouse-ear cress).